Here is a 389-residue protein sequence, read N- to C-terminus: MRRVTLFLNGSPKNGKVVAVYGTLSDLLSVASSKLGIKATSVYNGKGGLIDDIALIRDDDVLFVCEGEPFIDPQTDSKPPEGLLGFHTDWLTLNVGGRYFTTTRSTLVNKEPDSMLAHMFKDKGVWGNKQDHRGAFLIDRSPEYFEPILNYLRHGQLIVNDGINLLGVLEEARFFGIDSLIEHLEVAIKNSQPPEDHSPISRKEFVRFLLATPTKSELRCQGLNFSGADLSRLDLRYINFKMANLSRCNLAHANLCCANLERADLSGSVLDCANLQGVKMLCSNAEGASLKLCNFEDPSGLKANLEGANLKGVDMEGSQMTGINLRVATLKNAKLKNCNLRGATLAGTDLENCDLSGCDLQEANLRGSNVKGAIFEEMLTPLHMSQSVR.

Residues 3 to 82 enclose the KHA domain; it reads RVTLFLNGSP…PQTDSKPPEG (80 aa). S11 carries the post-translational modification Phosphoserine. The 73-residue stretch at 89 to 161 folds into the BTB domain; it reads DWLTLNVGGR…LRHGQLIVND (73 aa). 3 consecutive Pentapeptide repeat domains span residues 224 to 256, 258 to 297, and 338 to 376; these read NFSG…ANLC, ANLE…NFED, and CNLR…AIFE.

In terms of assembly, forms pentamers. Component of a complex composed of 5 subunits of KCTD9 and 5 CUL3.

It functions in the pathway protein modification; protein ubiquitination. Substrate-specific adapter of a BCR (BTB-CUL3-RBX1) E3 ubiquitin-protein ligase complex, which mediates the ubiquitination of target proteins, leading to their degradation by the proteasome. This is BTB/POZ domain-containing protein KCTD9 (KCTD9) from Homo sapiens (Human).